A 73-amino-acid chain; its full sequence is Stigmurin (73 aa).

Positions 1 to 22 (MQIKHLITLFFLVLIVADQCSA) are cleaved as a signal peptide. Position 39 is a lysine amide (lysine 39). Residues 45–73 (EISAQIEQYKDLQKREAELEKLLDRLPMY) constitute a propeptide that is removed on maturation.

Belongs to the non-disulfide-bridged peptide (NDBP) superfamily. Short antimicrobial peptide (group 4) family. As to expression, expressed by the venom gland.

The protein localises to the secreted. Functionally, antimicrobial peptide with activity against Gram-positive bacterial strains (S.aureus (MIC=2-140 uM), methicillin-resistant S.aureus (MRSA) (MIC=8-17 uM), S.epidermidis (MIC=1.17 uM), and the yeasts C.albicans, C.krusei, and C.glabrata (MIC=34-69 uM)). Acts by disrupting the cell membrane (observed on outer layer of the S.aureus). Is not active against Gram-negative bacteria (E.coli, E.Cloacae, P.aeruginosa), and the Gram-positive bacterium E.faecalis. Also shows toxicity against several cell lines, but possess low hemolytic activity at the highest concentration tested. Also shows antiparasitic activity against Trypanosoma cruzi by decreasing the viability of the epimastigote and trypomastigote forms of the parasite. Displays high hydroxyl radical scavenging activity (antioxidant action). In a wound infection model, the topical application of this peptide demonstrates antibacterial effects, as well as an ability to accelerate wound closure speed, which suggests the induction of tissue repair. In the model of polymicrobial sepsis, it exhibits an antibiotic effect, reducing the levels of microorganisms in the infectious focus and the inflammatory responses in the lung and cecum of septic animals. This chain is Stigmurin, found in Tityus stigmurus (Brazilian scorpion).